Consider the following 363-residue polypeptide: Ribonuclease D (363 aa).

Residues 5–168 form the 3'-5' exonuclease domain; that stretch reads ITHPSELTDR…AIHDELTRRL (164 aa). In terms of domain architecture, HRDC spans 208–288; it reads EPAAQRRLLR…NTPLPDEEHA (81 aa).

It belongs to the RNase D family. A divalent metal cation serves as cofactor.

The protein resides in the cytoplasm. The enzyme catalyses Exonucleolytic cleavage that removes extra residues from the 3'-terminus of tRNA to produce 5'-mononucleotides.. Its function is as follows. Exonuclease involved in the 3' processing of various precursor tRNAs. Initiates hydrolysis at the 3'-terminus of an RNA molecule and releases 5'-mononucleotides. The protein is Ribonuclease D of Xanthomonas oryzae pv. oryzae (strain KACC10331 / KXO85).